The primary structure comprises 102 residues: Citrate lyase acyl carrier protein (102 aa).

At serine 14 the chain carries O-(phosphoribosyl dephospho-coenzyme A)serine.

The protein belongs to the CitD family. As to quaternary structure, oligomer with a subunit composition of (alpha,beta,gamma)6.

The protein localises to the cytoplasm. Its function is as follows. Covalent carrier of the coenzyme of citrate lyase. The protein is Citrate lyase acyl carrier protein of Streptococcus pyogenes serotype M2 (strain MGAS10270).